The following is a 331-amino-acid chain: Beta-ketoacyl-[acyl-carrier-protein] synthase III (331 aa).

Active-site residues include C113 and H253. Residues 254-258 are ACP-binding; that stretch reads QANTR. The active site involves N283.

It belongs to the thiolase-like superfamily. FabH family. Homodimer.

It localises to the cytoplasm. It carries out the reaction malonyl-[ACP] + acetyl-CoA + H(+) = 3-oxobutanoyl-[ACP] + CO2 + CoA. Its pathway is lipid metabolism; fatty acid biosynthesis. Its function is as follows. Catalyzes the condensation reaction of fatty acid synthesis by the addition to an acyl acceptor of two carbons from malonyl-ACP. Catalyzes the first condensation reaction which initiates fatty acid synthesis and may therefore play a role in governing the total rate of fatty acid production. Possesses both acetoacetyl-ACP synthase and acetyl transacylase activities. Its substrate specificity determines the biosynthesis of branched-chain and/or straight-chain of fatty acids. The sequence is that of Beta-ketoacyl-[acyl-carrier-protein] synthase III from Desulfitobacterium hafniense (strain Y51).